The sequence spans 99 residues: MSEESMDTGFLVINTKDKQDKTVKKPLRILIKKSLENYFLHLDKSQCVSNLYQLVLSELEQPLLDIIMQHTRGNQTRAASIMGINRSTLRKKLKRYGMN.

The segment at residues 75 to 94 (QTRAASIMGINRSTLRKKLK) is a DNA-binding region (H-T-H motif).

Belongs to the transcriptional regulatory Fis family. As to quaternary structure, homodimer.

Its function is as follows. Activates ribosomal RNA transcription. Plays a direct role in upstream activation of rRNA promoters. This is DNA-binding protein Fis from Buchnera aphidicola subsp. Schizaphis graminum (strain Sg).